The following is a 293-amino-acid chain: 4-hydroxy-tetrahydrodipicolinate synthase (293 aa).

Residue Thr-45 coordinates pyruvate. Residue Tyr-133 is the Proton donor/acceptor of the active site. The Schiff-base intermediate with substrate role is filled by Lys-161. Ile-203 is a binding site for pyruvate.

The protein belongs to the DapA family. Homotetramer; dimer of dimers.

Its subcellular location is the cytoplasm. It carries out the reaction L-aspartate 4-semialdehyde + pyruvate = (2S,4S)-4-hydroxy-2,3,4,5-tetrahydrodipicolinate + H2O + H(+). It participates in amino-acid biosynthesis; L-lysine biosynthesis via DAP pathway; (S)-tetrahydrodipicolinate from L-aspartate: step 3/4. Catalyzes the condensation of (S)-aspartate-beta-semialdehyde [(S)-ASA] and pyruvate to 4-hydroxy-tetrahydrodipicolinate (HTPA). This chain is 4-hydroxy-tetrahydrodipicolinate synthase, found in Shewanella piezotolerans (strain WP3 / JCM 13877).